The following is a 293-amino-acid chain: MEEPSGAQLLGPVEIRALAEKLDVTPTKKLGQNFVHDPNTVRRIVAAAELTPDDHVVEVGPGLGSLTLALVESAASVTAVEIDPRLAAELPETFQWRAPALAHKLSIVLKDALKVQQSDMAVQPTALVANLPYNVSVPVLLHMMEEFPTINKVLVMVQAEVADRLAADPGSKIYGVPSVKASFYGPVTRAGSIGKNVFWPAPKIESGLVKIVREDTAWKQDDETRKKVWPIIDAAFLQRRKTLRAALSGHYGSGQAAEEALRAADIDPTLRGEKLDVTDYVRLAGVLQQKDEK.

Positions 33, 35, 60, 81, 111, and 130 each coordinate S-adenosyl-L-methionine.

This sequence belongs to the class I-like SAM-binding methyltransferase superfamily. rRNA adenine N(6)-methyltransferase family. RsmA subfamily.

The protein resides in the cytoplasm. The enzyme catalyses adenosine(1518)/adenosine(1519) in 16S rRNA + 4 S-adenosyl-L-methionine = N(6)-dimethyladenosine(1518)/N(6)-dimethyladenosine(1519) in 16S rRNA + 4 S-adenosyl-L-homocysteine + 4 H(+). Functionally, specifically dimethylates two adjacent adenosines (A1518 and A1519) in the loop of a conserved hairpin near the 3'-end of 16S rRNA in the 30S particle. May play a critical role in biogenesis of 30S subunits. This chain is Ribosomal RNA small subunit methyltransferase A, found in Corynebacterium glutamicum (strain ATCC 13032 / DSM 20300 / JCM 1318 / BCRC 11384 / CCUG 27702 / LMG 3730 / NBRC 12168 / NCIMB 10025 / NRRL B-2784 / 534).